The primary structure comprises 141 residues: MPVIPALGEAKGEVLPPGDTTTIIPLNWMLKSPPGHFGLLLLLSQQAKNGVMVLAGVTDPEYQDEISLLLHNEGHLKEVKMEGARLGLPGRAESLEHQVQSHLNMIAQSQRTFQKKDAGKAIILSKLTQEQKTKHCMFSLH.

Belongs to the dUTPase family.

The chain is Putative inactive deoxyuridine 5'-triphosphate nucleotidohydrolase-like protein FLJ16323 from Homo sapiens (Human).